A 1191-amino-acid polypeptide reads, in one-letter code: Homeodomain-interacting protein kinase 3 (1191 aa).

Lys27 is covalently cross-linked (Glycyl lysine isopeptide (Lys-Gly) (interchain with G-Cter in SUMO2)). A Protein kinase domain is found at 197–525; that stretch reads YEVLDFLGRG…PIETLNHPFV (329 aa). Residues 203–211 and Lys226 each bind ATP; that span reads LGRGTFGQV. The Proton acceptor role is filled by Asp322. Position 359 is a phosphotyrosine (Tyr359). The segment at 766-920 is interaction with AR; the sequence is QNRSNSLQNT…NSMSDDEQES (155 aa). An interaction with FAS region spans residues 774–867; that stretch reads NTNVPHSAFI…SPRPSLRECK (94 aa). Positions 801-828 are disordered; the sequence is TQDNHTSEGEARTCHEASVRQDSSVSDK. The segment covering 802–828 has biased composition (basic and acidic residues); that stretch reads QDNHTSEGEARTCHEASVRQDSSVSDK. The interaction with UBL1 stretch occupies residues 846–856; that stretch reads ITISSDTDDEE. Residues 888-905 show a composition bias toward low complexity; it reads SSPDSTLSTSSSGQSSPS. Disordered stretches follow at residues 888–960 and 993–1022; these read SSPD…TCAG and TCQPLTKGQPAPGKLNQPSASAARQQKPTS. A compositionally biased stretch (polar residues) spans 1008–1022; that stretch reads NQPSASAARQQKPTS.

It belongs to the protein kinase superfamily. CMGC Ser/Thr protein kinase family. HIPK subfamily. In terms of assembly, interacts with Nkx1-2. Interacts with FAS and DAXX. Probably part of a complex consisting of HIPK3, FAS and FADD. Interacts with UBL1/SUMO-1. Interacts with and stabilizes ligand-bound androgen receptor (AR). In terms of processing, autophosphorylated. Autophosphorylation is not required for catalytic activity. Post-translationally, may be sumoylated.

The protein resides in the nucleus. The enzyme catalyses L-seryl-[protein] + ATP = O-phospho-L-seryl-[protein] + ADP + H(+). The catalysed reaction is L-threonyl-[protein] + ATP = O-phospho-L-threonyl-[protein] + ADP + H(+). In terms of biological role, seems to negatively regulate apoptosis by promoting FADD phosphorylation. Enhances androgen receptor-mediated transcription. May act as a transcriptional corepressor for NK homeodomain transcription factors. This Rattus norvegicus (Rat) protein is Homeodomain-interacting protein kinase 3 (Hipk3).